Reading from the N-terminus, the 348-residue chain is Carbamoyl phosphate synthase small chain (348 aa).

The tract at residues 1–167 is CPSase; the sequence is MKRYLITSDG…VKNIRGKGER (167 aa). Residues Ser-45, Gly-213, and Gly-215 each contribute to the L-glutamine site. The Glutamine amidotransferase type-1 domain occupies 168–348; it reads RILFIDLGSK…RRRTEDAAKG (181 aa). Residue Cys-242 is the Nucleophile of the active site. Positions 243, 246, 282, 284, and 285 each coordinate L-glutamine. Catalysis depends on residues His-321 and Glu-323.

Belongs to the CarA family. Composed of two chains; the small (or glutamine) chain promotes the hydrolysis of glutamine to ammonia, which is used by the large (or ammonia) chain to synthesize carbamoyl phosphate. Tetramer of heterodimers (alpha,beta)4.

The catalysed reaction is hydrogencarbonate + L-glutamine + 2 ATP + H2O = carbamoyl phosphate + L-glutamate + 2 ADP + phosphate + 2 H(+). It carries out the reaction L-glutamine + H2O = L-glutamate + NH4(+). It participates in amino-acid biosynthesis; L-arginine biosynthesis; carbamoyl phosphate from bicarbonate: step 1/1. Its pathway is pyrimidine metabolism; UMP biosynthesis via de novo pathway; (S)-dihydroorotate from bicarbonate: step 1/3. In terms of biological role, small subunit of the glutamine-dependent carbamoyl phosphate synthetase (CPSase). CPSase catalyzes the formation of carbamoyl phosphate from the ammonia moiety of glutamine, carbonate, and phosphate donated by ATP, constituting the first step of 2 biosynthetic pathways, one leading to arginine and/or urea and the other to pyrimidine nucleotides. The small subunit (glutamine amidotransferase) binds and cleaves glutamine to supply the large subunit with the substrate ammonia. This is Carbamoyl phosphate synthase small chain from Thermoplasma acidophilum (strain ATCC 25905 / DSM 1728 / JCM 9062 / NBRC 15155 / AMRC-C165).